The following is a 397-amino-acid chain: Chorismate synthase (397 aa).

Residues Arg40 and Arg46 each contribute to the NADP(+) site. FMN is bound by residues 129 to 131 (RSS), 257 to 258 (QA), Gly302, 317 to 321 (KPISS), and Arg343.

Belongs to the chorismate synthase family. Homotetramer. FMNH2 serves as cofactor.

It carries out the reaction 5-O-(1-carboxyvinyl)-3-phosphoshikimate = chorismate + phosphate. It participates in metabolic intermediate biosynthesis; chorismate biosynthesis; chorismate from D-erythrose 4-phosphate and phosphoenolpyruvate: step 7/7. Functionally, catalyzes the anti-1,4-elimination of the C-3 phosphate and the C-6 proR hydrogen from 5-enolpyruvylshikimate-3-phosphate (EPSP) to yield chorismate, which is the branch point compound that serves as the starting substrate for the three terminal pathways of aromatic amino acid biosynthesis. This reaction introduces a second double bond into the aromatic ring system. The protein is Chorismate synthase of Chlorobium phaeovibrioides (strain DSM 265 / 1930) (Prosthecochloris vibrioformis (strain DSM 265)).